Reading from the N-terminus, the 284-residue chain is Tropomyosin beta chain (284 aa).

N-acetylmethionine is present on Met1. The interval 1–78 (MDAIKKKMQM…EKLEQAEKKA (78 aa)) is disordered. The stretch at 1-284 (MDAIKKKMQM…DNALNDITSL (284 aa)) forms a coiled coil. 2 stretches are compositionally biased toward basic and acidic residues: residues 12–40 (KLDKENAIDRAEQAEADKKQAEDRCKQLE) and 51–78 (KGTEDEVEKYSESVKDAQEKLEQAEKKA). Thr53 is modified (phosphothreonine). At Ser61 the chain carries Phosphoserine; by PIK3CG. Thr79 carries the post-translational modification Phosphothreonine. Ser87 carries the phosphoserine modification. The residue at position 108 (Thr108) is a Phosphothreonine. The tract at residues 117-136 (EKAADESERGMKVIENRAMK) is disordered. Phosphoserine occurs at positions 158, 206, and 215. Residue Thr252 is modified to Phosphothreonine. Tyr261 carries the phosphotyrosine modification. Residue Ser271 is modified to Phosphoserine. Thr282 carries the post-translational modification Phosphothreonine. Phosphoserine is present on Ser283.

Belongs to the tropomyosin family. Homodimer. Heterodimer of an alpha (TPM1, TPM3 or TPM4) and a beta (TPM2) chain. In terms of processing, phosphorylated on Ser-61 by PIK3CG. Phosphorylation on Ser-61 is required for ADRB2 internalization.

The protein localises to the cytoplasm. The protein resides in the cytoskeleton. Its function is as follows. Binds to actin filaments in muscle and non-muscle cells. Plays a central role, in association with the troponin complex, in the calcium dependent regulation of vertebrate striated muscle contraction. Smooth muscle contraction is regulated by interaction with caldesmon. In non-muscle cells is implicated in stabilizing cytoskeleton actin filaments. The non-muscle isoform may have a role in agonist-mediated receptor internalization. In Mus musculus (Mouse), this protein is Tropomyosin beta chain (Tpm2).